Consider the following 93-residue polypeptide: YcgL domain-containing protein Swoo_2115 (93 aa).

The region spanning 1–85 is the YcgL domain; that stretch reads MICAVYKSRR…PVVNLLEEHK (85 aa).

The chain is YcgL domain-containing protein Swoo_2115 from Shewanella woodyi (strain ATCC 51908 / MS32).